The primary structure comprises 205 residues: Pyrrolidone-carboxylate peptidase (205 aa).

Residues E78, C141, and H165 contribute to the active site.

The protein belongs to the peptidase C15 family. In terms of assembly, homotetramer.

It is found in the cytoplasm. It carries out the reaction Release of an N-terminal pyroglutamyl group from a polypeptide, the second amino acid generally not being Pro.. In terms of biological role, removes 5-oxoproline from various penultimate amino acid residues except L-proline. In Thermosipho africanus (strain TCF52B), this protein is Pyrrolidone-carboxylate peptidase.